A 262-amino-acid chain; its full sequence is Small ribosomal subunit protein eS4 (262 aa).

One can recognise an S4 RNA-binding domain in the interval 42 to 105 (LPLXVFLRNR…NEHFRLAYDV (64 aa)).

It belongs to the eukaryotic ribosomal protein eS4 family.

In Candida albicans (Yeast), this protein is Small ribosomal subunit protein eS4 (RPS4).